Here is a 180-residue protein sequence, read N- to C-terminus: Chromosome-anchoring protein RacA (180 aa).

Residues 5–25 (TPFIAKKLGVSPKAVVRIAQQ) constitute a DNA-binding region (H-T-H motif). The stretch at 67-151 (KASSNEVEEL…LEAALTKEEP (85 aa)) forms a coiled coil.

This sequence belongs to the RacA family.

Its subcellular location is the cytoplasm. Required for the formation of axial filaments and for anchoring the origin regions at the cell poles in sporulating cells, thus ensuring proper chromosome segregation in the prespore. Binds in a dispersed manner throughout the chromosome but preferentially to sites clustered in the origin portion of the chromosome, causing condensation of the chromosome and its remodeling into an elongated, anchored structure. This Bacillus cereus (strain B4264) protein is Chromosome-anchoring protein RacA.